The chain runs to 291 residues: Ribosomal RNA small subunit methyltransferase H (291 aa).

Residues 25–27 (GGH), Asp-45, Phe-73, Asp-88, and Gln-95 each bind S-adenosyl-L-methionine.

Belongs to the methyltransferase superfamily. RsmH family.

Its subcellular location is the cytoplasm. The enzyme catalyses cytidine(1402) in 16S rRNA + S-adenosyl-L-methionine = N(4)-methylcytidine(1402) in 16S rRNA + S-adenosyl-L-homocysteine + H(+). Specifically methylates the N4 position of cytidine in position 1402 (C1402) of 16S rRNA. The sequence is that of Ribosomal RNA small subunit methyltransferase H from Flavobacterium psychrophilum (strain ATCC 49511 / DSM 21280 / CIP 103535 / JIP02/86).